Reading from the N-terminus, the 625-residue chain is Histone promoter control protein 2 (625 aa).

Disordered stretches follow at residues 1–164 (MDQK…FAAK) and 295–437 (APAE…VSPP). Over residues 11 to 28 (SKSGSKQTKSSGKMQTQT) the composition is skewed to low complexity. Residues 29–39 (DTNAEVLNTDN) are compositionally biased toward polar residues. 2 positions are modified to phosphoserine: S47 and S49. The segment covering 83–105 (SPSPIIISGSSSTSPSGPSSSST) has biased composition (low complexity). Over residues 113–135 (NRFNKNTVELYQHSPSPVMTTNK) the composition is skewed to polar residues. The span at 136-154 (TDTEEKRQNNRNMDNKNTP) shows a compositional bias: basic and acidic residues. Residues 155–164 (ERGSSSFAAK) are compositionally biased toward polar residues. Low complexity-rich tracts occupy residues 305-321 (SISS…SSKK) and 330-355 (SSSA…NSSD). 2 stretches are compositionally biased toward polar residues: residues 363-381 (SNKT…SKLN) and 404-415 (GNSTEAKNSTSN). The residue at position 435 (S435) is a Phosphoserine.

Belongs to the HPC2 family. As to quaternary structure, component of the HIR complex, composed of HIR1, HIR2, HIR3 and HPC2. This complex may consist of one copy of HIR1 and HIR3 and two copies of HIR2 and HPC2. The HIR complex interacts with ASF1. Interacts with RTT106.

Its subcellular location is the nucleus. The protein resides in the chromosome. Its function is as follows. Component of the HIR complex, which functions as a histone chaperone that cooperates with ASF1 to promote replication-independent chromatin assembly. The HIR complex is also required for the periodic repression of three of the four histone gene loci during cell cycle as well as for autogenous regulation of the HTA1-HTB1 locus by H2A and H2B. DNA-binding by the HIR complex may repress transcription by inhibiting nucleosome remodeling by the SWI/SNF complex. The HIR complex may also be required for transcriptional silencing of centromeric, telomeric and mating-type loci in the absence of CAF-1. This chain is Histone promoter control protein 2 (HPC2), found in Saccharomyces cerevisiae (strain ATCC 204508 / S288c) (Baker's yeast).